The sequence spans 414 residues: MHSRGREIVVLLNPWSINEAVSSYCTYFIKQDSKSFGIMVSWKGIYFILTLFWGSFFGSIFMLSPFLPLMFVNPSWYRWINNRLVATWLTLPVALLETMFGVKVIITGDAFVPGERSVIIMNHRTRMDWMFLWNCLMRYSYLRLEKICLKASLKGVPGFGWAMQAAAYIFIHRKWKDDKSHFEDMIDYFCDIHEPLQLLIFPEGTDLTENSKSRSNAFAEKNGLQKYEYVLHPRTTGFTFVVDRLREGKNLDAVHDITVAYPHNIPQSEKHLLQGDFPREIHFHVHRYPIDTLPTSKEDLQLWCHKRWEEKEERLRSFYQGEKNFYFTGQSVIPPCKSELRVLVVKLLSILYWTLFSPAMCLLIYLYSLVKWYFIITIVIFVLQERIFGGLEIIELACYRLLHKQPHLNSKKNE.

Transmembrane regions (helical) follow at residues 47–67 and 86–106; these read FILT…SPFL and ATWL…KVII. Residues 123 to 128 carry the HXXXXD motif motif; it reads HRTRMD. Lys221 is subject to N6-acetyllysine. Transmembrane regions (helical) follow at residues 340-360 and 362-382; these read LRVL…SPAM and LLIY…VIFV.

The protein belongs to the 1-acyl-sn-glycerol-3-phosphate acyltransferase family. Expressed at higher level in heart, kidney and pancreas than in brain, spleen, liver, lung, small intestine and placenta.

Its subcellular location is the endoplasmic reticulum membrane. It carries out the reaction a 1-acyl-sn-glycero-3-phosphate + an acyl-CoA = a 1,2-diacyl-sn-glycero-3-phosphate + CoA. The enzyme catalyses a 1-acyl-sn-glycero-3-phospho-(1D-myo-inositol) + an acyl-CoA = a 1,2-diacyl-sn-glycero-3-phospho-(1D-myo-inositol) + CoA. The catalysed reaction is 1-acyl-sn-glycero-3-phospho-(1'-sn-glycerol) + an acyl-CoA = a 1,2-diacyl-sn-glycero-3-phospho-(1'-sn-glycerol) + CoA. It catalyses the reaction 1-hexadecanoyl-sn-glycero-3-phosphate + (9Z)-octadecenoyl-CoA = 1-hexadecanoyl-2-(9Z-octadecenoyl)-sn-glycero-3-phosphate + CoA. It carries out the reaction 1-(9Z-octadecenoyl)-sn-glycero-3-phosphate + (9Z)-octadecenoyl-CoA = 1,2-di-(9Z-octadecenoyl)-sn-glycero-3-phosphate + CoA. The enzyme catalyses 1-(9Z,12Z)-octadecadienoyl-sn-glycero-3-phosphate + (9Z)-octadecenoyl-CoA = 1-(9Z,12Z)-octadecadienoyl-2-(9Z)-octadecenoyl-sn-glycero-3-phosphate + CoA. The catalysed reaction is 1-(9Z,12Z,15Z)-octadecatrienoyl-sn-glycero-3-phosphate + (9Z)-octadecenoyl-CoA = 1-(9Z,12Z,15Z)-octadecatrienoyl-2-(9Z)-octadecenoyl-sn-glycero-3-phosphate + CoA. It catalyses the reaction 1-(9Z-octadecenoyl)-sn-glycero-3-phosphate + hexadecanoyl-CoA = 1-(9Z)-octadecenoyl-2-hexadecanoyl-sn-glycero-3-phosphate + CoA. It carries out the reaction 1-(9Z-octadecenoyl)-sn-glycero-3-phosphate + octadecanoyl-CoA = 1-(9Z-octadecenoyl)-2-octadecanoyl-sn-glycero-3-phosphate + CoA. The enzyme catalyses 1-acyl-sn-glycero-3-phospho-(1'-sn-glycerol) + (9Z)-octadecenoyl-CoA = 1-acyl-2-(9Z-octadecenoyl)-sn-glycero-3-phospho-(1'-sn-glycerol) + CoA. The catalysed reaction is a 1-acyl-sn-glycero-3-phospho-(1D-myo-inositol) + (9Z)-octadecenoyl-CoA = a 1-acyl-2-(9Z-octadecenoyl)-sn-glycero-3-phospho-(1D-myo-inositol) + CoA. It catalyses the reaction 1-hexadecanoyl-sn-glycero-3-phospho-(1D-myo-inositol) + hexadecanoyl-CoA = 1,2-dihexadecanoyl-sn-glycero-3-phospho-(1D-myo-inositol) + CoA. It carries out the reaction 1-hexadecanoyl-sn-glycero-3-phospho-(1D-myo-inositol) + octadecanoyl-CoA = 1-hexadecanoyl-2-octadecanoyl-sn-glycero-3-phospho-(1D-myo-inositol) + CoA. The enzyme catalyses 1-hexadecanoyl-sn-glycero-3-phospho-(1D-myo-inositol) + (9Z)-octadecenoyl-CoA = 1-hexadecanoyl-2-(9Z-octadecenoyl)-sn-glycero-3-phospho-(1D-myo-inositol) + CoA. The catalysed reaction is 1-hexadecanoyl-sn-glycero-3-phospho-(1D-myo-inositol) + (9Z,12Z)-octadecadienoyl-CoA = 1-hexadecanoyl-2-(9Z,12Z-octadecadienoyl)-sn-glycero-3-phospho-(1D-myo-inositol) + CoA. It catalyses the reaction 1-hexadecanoyl-sn-glycero-3-phospho-(1D-myo-inositol) + (5Z,8Z,11Z,14Z)-eicosatetraenoyl-CoA = 1-hexadecanoyl-2-(5Z,8Z,11Z,14Z-eicosatetraenoyl)-sn-glycero-3-phospho-D-myo-inositol + CoA. It carries out the reaction 1-hexadecanoyl-sn-glycero-3-phospho-(1'-sn-glycerol) + hexadecanoyl-CoA = 1,2-dihexadecanoyl-sn-glycero-3-phospho-(1'-sn-glycerol) + CoA. The enzyme catalyses 1-hexadecanoyl-sn-glycero-3-phospho-(1'-sn-glycerol) + octadecanoyl-CoA = 1-hexadecanoyl-2-octadecanoyl-sn-glycero-3-phospho-(1'-sn-glycerol) + CoA. The catalysed reaction is 1-hexadecanoyl-sn-glycero-3-phospho-(1'-sn-glycerol) + (9Z)-octadecenoyl-CoA = 1-hexadecanoyl-2-(9Z-octadecenoyl)-sn-glycero-3-phospho-(1'-sn-glycerol) + CoA. It catalyses the reaction 1-hexadecanoyl-sn-glycero-3-phospho-(1'-sn-glycerol) + (9Z,12Z)-octadecadienoyl-CoA = 1-hexadecanoyl-2-(9Z,12Z-octadecadienoyl)-sn-glycero-3-phospho-(1'-sn-glycerol) + CoA. It carries out the reaction 1-tetradecanoyl-sn-glycero-3-phospho-(1'-sn-glycerol) + (9Z)-octadecenoyl-CoA = 1-tetradecanoyl-2-(9Z-octadecenoyl)-sn-glycero-3-phospho-(1'-sn-glycerol) + CoA. The enzyme catalyses 1-octadecanoyl-sn-glycero-3-phospho-(1'-sn-glycerol) + (9Z)-octadecenoyl-CoA = 1-octadecanoyl-2-(9Z-octadecenoyl)-sn-glycero-3-phospho-(1'-sn-glycerol) + CoA. The catalysed reaction is 1-(9Z-octadecenoyl)-sn-glycero-3-phospho-(1'-sn-glycerol) + (9Z)-octadecenoyl-CoA = 1,2-di-(9Z-octadecenoyl)-sn-glycero-3-phospho-(1'-sn-glycerol) + CoA. It catalyses the reaction 1-hexadecanoyl-sn-glycero-3-phospho-(1D-myo-inositol) + dodecanoyl-CoA = 1-hexadecanoyl-2-dodecanoyl-sn-glycero-3-phospho-(1D-myo-inositol) + CoA. It carries out the reaction 1',3'-bis-[1-acyl-sn-glycero-3-phospho]-glycerol + (9Z)-octadecenoyl-CoA = 1'-[1-acyl-2-(9Z)-octadecenoyl-sn-glycero-3-phospho],3'-[1-acyl,2-hydroxy-sn-glycero-3-phospho]-glycerol + CoA. The enzyme catalyses 1'-[1,2-diacyl-sn-glycero-3-phospho],3'-[1-acyl-sn-glycero-3-phospho]-glycerol + (9Z)-octadecenoyl-CoA = 1'-[1,2-diacyl-sn-glycero-3-phospho],3'-[1-acyl,2-(9Z)-octadecenoyl-sn-glycero-3-phospho]-glycerol + CoA. The catalysed reaction is 1'-[1,2-diacyl-sn-glycero-3-phospho],3'-[1-acyl-sn-glycero-3-phospho]-glycerol + (9Z,12Z)-octadecadienoyl-CoA = 1'-[1,2-diacyl-sn-glycero-3-phospho],3'-[1-acyl,2-(9Z,12Z)-octadecadienoyl-sn-glycero-3-phospho]-glycerol + CoA. It catalyses the reaction 1'-[1,2-diacyl-sn-glycero-3-phospho],3'-[1-acyl-sn-glycero-3-phospho]-glycerol + dodecanoyl-CoA = 1'-[1,2-diacyl-sn-glycero-3-phospho],3'-[1-acyl,2-dodecanoyl-sn-glycero-3-phospho]-glycerol + CoA. It carries out the reaction 1',3'-bis-[1-acyl-sn-glycero-3-phospho]-glycerol + dodecanoyl-CoA = 1'-[1-acyl-2-dodecanoyl-sn-glycero-3-phospho],3'-[1-acyl,2-hydroxy-sn-glycero-3-phospho]-glycerol + CoA. The enzyme catalyses a 1-acyl-sn-glycero-3-phosphate + (9Z)-octadecenoyl-CoA = a 1-acyl-2-(9Z-octadecenoyl)-sn-glycero-3-phosphate + CoA. The catalysed reaction is 1',3'-bis-[1-acyl-sn-glycero-3-phospho]-glycerol + (9Z,12Z)-octadecadienoyl-CoA = 1'-[1-acyl-2-(9Z,12Z)-octadecadienoyl-sn-glycero-3-phospho],3'-[1-acyl,2-hydroxy-sn-glycero-3-phospho]-glycerol + CoA. It catalyses the reaction 1',3'-bis-[1-acyl-sn-glycero-3-phospho]-glycerol + hexadecanoyl-CoA = 1'-[1-acyl-2-hexadecanoyl-sn-glycero-3-phospho],3'-[1-acyl,2-hydroxy-sn-glycero-3-phospho]-glycerol + CoA. It carries out the reaction 1',3'-bis-[1-acyl-sn-glycero-3-phospho]-glycerol + octadecanoyl-CoA = 1'-[1-acyl-2-octadecanoyl-sn-glycero-3-phospho],3'-[1-acyl,2-hydroxy-sn-glycero-3-phospho]-glycerol + CoA. The enzyme catalyses 1'-[1,2-diacyl-sn-glycero-3-phospho],3'-[1-acyl-sn-glycero-3-phospho]-glycerol + octanoyl-CoA = 1'-[1,2-diacyl-sn-glycero-3-phospho],3'-[1-acyl,2-octanoyl-sn-glycero-3-phospho]-glycerol + CoA. The catalysed reaction is 1',3'-bis-[1-acyl-sn-glycero-3-phospho]-glycerol + octanoyl-CoA = 1'-[1-acyl-2-octanoyl-sn-glycero-3-phospho],3'-[1-acyl,2-hydroxy-sn-glycero-3-phospho]-glycerol + CoA. It catalyses the reaction 1'-[1,2-diacyl-sn-glycero-3-phospho],3'-[1-acyl-sn-glycero-3-phospho]-glycerol + hexadecanoyl-CoA = 1'-[1,2-diacyl-sn-glycero-3-phospho],3'-[1-acyl,2-hexadecanoyl-sn-glycero-3-phospho]-glycerol + CoA. It carries out the reaction 1'-[1,2-diacyl-sn-glycero-3-phospho],3'-[1-acyl-sn-glycero-3-phospho]-glycerol + (5Z,8Z,11Z,14Z)-eicosatetraenoyl-CoA = 1'-[1,2-diacyl-sn-glycero-3-phospho],3'-[1-acyl,2-(5Z,8Z,11Z,14Z)-eicosatetraenoyl-sn-glycero-3-phospho]-glycerol + CoA. The enzyme catalyses 1',3'-bis-[1-acyl-sn-glycero-3-phospho]-glycerol + (5Z,8Z,11Z,14Z)-eicosatetraenoyl-CoA = 1'-[1-acyl-2-(5Z,8Z,11Z,14Z)-eicosatetraenoyl-sn-glycero-3-phospho],3'-[1-acyl,2-hydroxy-sn-glycero-3-phospho]-glycerol + CoA. The catalysed reaction is a 1-acyl-sn-glycero-3-phospho-(1D-myo-inositol) + octadecanoyl-CoA = a 1-acyl-2-octadecanoyl-sn-glycero-3-phospho-(1D-myo-inositol) + CoA. It catalyses the reaction a 2-acyl-sn-glycero-3-phospho-D-myo-inositol + octadecanoyl-CoA = 1-octadecanoyl-2-acyl-sn-glycero-3-phospho-1D-myo-inositol + CoA. The protein operates within phospholipid metabolism; CDP-diacylglycerol biosynthesis; CDP-diacylglycerol from sn-glycerol 3-phosphate: step 2/3. In terms of biological role, exhibits acyl-CoA:lysocardiolipin acyltransferase (ALCAT) activity; catalyzes the reacylation of lyso-cardiolipin to cardiolipin (CL), a key step in CL remodeling. Recognizes both monolysocardiolipin and dilysocardiolipin as substrates with a preference for linoleoyl-CoA and oleoyl-CoA as acyl donors. Also exhibits 1-acyl-sn-glycerol-3-phosphate acyltransferase activity (AGPAT) activity; converts 1-acyl-sn-glycerol-3- phosphate (lysophosphatidic acid or LPA) into 1,2-diacyl-sn-glycerol-3- phosphate (phosphatidic acid or PA) by incorporating an acyl moiety at the sn-2 position of the glycerol backbone. Possesses both lysophosphatidylinositol acyltransferase (LPIAT) and lysophosphatidylglycerol acyltransferase (LPGAT) activities. Required for establishment of the hematopoietic and endothelial lineages. The protein is Lysocardiolipin acyltransferase 1 (LCLAT1) of Homo sapiens (Human).